A 236-amino-acid polypeptide reads, in one-letter code: Leucyl/phenylalanyl-tRNA--protein transferase (236 aa).

Positions 1 to 13 (MNSLSYLNQDQQS) are enriched in polar residues. Positions 1–22 (MNSLSYLNQDQQSFPPPEQALS) are disordered.

The protein belongs to the L/F-transferase family.

The protein localises to the cytoplasm. It catalyses the reaction N-terminal L-lysyl-[protein] + L-leucyl-tRNA(Leu) = N-terminal L-leucyl-L-lysyl-[protein] + tRNA(Leu) + H(+). It carries out the reaction N-terminal L-arginyl-[protein] + L-leucyl-tRNA(Leu) = N-terminal L-leucyl-L-arginyl-[protein] + tRNA(Leu) + H(+). The catalysed reaction is L-phenylalanyl-tRNA(Phe) + an N-terminal L-alpha-aminoacyl-[protein] = an N-terminal L-phenylalanyl-L-alpha-aminoacyl-[protein] + tRNA(Phe). Its function is as follows. Functions in the N-end rule pathway of protein degradation where it conjugates Leu, Phe and, less efficiently, Met from aminoacyl-tRNAs to the N-termini of proteins containing an N-terminal arginine or lysine. This Shewanella piezotolerans (strain WP3 / JCM 13877) protein is Leucyl/phenylalanyl-tRNA--protein transferase.